The chain runs to 425 residues: Trigger factor (425 aa).

The 74-residue stretch at 158 to 231 (GDLVRVNMEV…VEEVYKRTLP (74 aa)) folds into the PPIase FKBP-type domain.

This sequence belongs to the FKBP-type PPIase family. Tig subfamily.

Its subcellular location is the cytoplasm. It carries out the reaction [protein]-peptidylproline (omega=180) = [protein]-peptidylproline (omega=0). Involved in protein export. Acts as a chaperone by maintaining the newly synthesized protein in an open conformation. Functions as a peptidyl-prolyl cis-trans isomerase. This is Trigger factor (tig) from Thermotoga maritima (strain ATCC 43589 / DSM 3109 / JCM 10099 / NBRC 100826 / MSB8).